Reading from the N-terminus, the 153-residue chain is MIKVKIVRVNKKAHLPVYATAHAAGMDVAACLDEPVMLEPFSTALIPSGFAIELPEGYEAQLRPRSGLALKHLISLPNSPATIDADYRGEVRVILVNFGKEPFSVAHGDRIAQMVVSRVERVDFDEAEELSMTQRGEGGFGHTGISAVHPRTH.

Substrate is bound by residues 65 to 67, N78, and 82 to 84; these read RSG and TID. Residues 132–153 are disordered; it reads MTQRGEGGFGHTGISAVHPRTH.

The protein belongs to the dUTPase family. Requires Mg(2+) as cofactor.

The enzyme catalyses dUTP + H2O = dUMP + diphosphate + H(+). Its pathway is pyrimidine metabolism; dUMP biosynthesis; dUMP from dCTP (dUTP route): step 2/2. Its function is as follows. This enzyme is involved in nucleotide metabolism: it produces dUMP, the immediate precursor of thymidine nucleotides and it decreases the intracellular concentration of dUTP so that uracil cannot be incorporated into DNA. This chain is Deoxyuridine 5'-triphosphate nucleotidohydrolase, found in Chlorobium limicola (strain DSM 245 / NBRC 103803 / 6330).